Reading from the N-terminus, the 645-residue chain is Threonine--tRNA ligase (645 aa).

One can recognise a TGS domain in the interval methionine 1 to threonine 61. Positions aspartate 243–proline 536 are catalytic. Zn(2+) is bound by residues cysteine 336, histidine 387, and histidine 513.

This sequence belongs to the class-II aminoacyl-tRNA synthetase family. As to quaternary structure, homodimer. The cofactor is Zn(2+).

It localises to the cytoplasm. It carries out the reaction tRNA(Thr) + L-threonine + ATP = L-threonyl-tRNA(Thr) + AMP + diphosphate + H(+). Functionally, catalyzes the attachment of threonine to tRNA(Thr) in a two-step reaction: L-threonine is first activated by ATP to form Thr-AMP and then transferred to the acceptor end of tRNA(Thr). Also edits incorrectly charged L-seryl-tRNA(Thr). The sequence is that of Threonine--tRNA ligase from Gluconobacter oxydans (strain 621H) (Gluconobacter suboxydans).